The sequence spans 233 residues: Pirin-like protein YhaK (233 aa).

The protein belongs to the pirin family. Monomer.

The protein resides in the cytoplasm. Does not have quercetin 2,3-dioxygenase activity. The sequence is that of Pirin-like protein YhaK (yhaK) from Escherichia coli (strain K12).